A 475-amino-acid polypeptide reads, in one-letter code: Lactate utilization protein B (475 aa).

4Fe-4S ferredoxin-type domains follow at residues 304–334 (GTEFQPVLQCIRCAACVNVCPVYRHIGGHSY) and 353–382 (YDDYKELPYASSLCAACTEACPVKIPLHEL). C313, C316, C319, C323, C366, C369, and C373 together coordinate [4Fe-4S] cluster.

It belongs to the LutB/YkgF family.

In terms of biological role, is involved in L-lactate degradation and allows cells to grow with lactate as the sole carbon source. Has probably a role as an electron transporter during oxidation of L-lactate. The protein is Lactate utilization protein B of Geobacillus sp. (strain WCH70).